The primary structure comprises 874 residues: DNA mismatch repair protein MutS (874 aa).

613–620 is an ATP binding site; that stretch reads GPNMGGKS. A disordered region spans residues 799–820; sequence EAGSTPSPAPVSVNEPKPAAPT.

This sequence belongs to the DNA mismatch repair MutS family.

This protein is involved in the repair of mismatches in DNA. It is possible that it carries out the mismatch recognition step. This protein has a weak ATPase activity. This Marinobacter nauticus (strain ATCC 700491 / DSM 11845 / VT8) (Marinobacter aquaeolei) protein is DNA mismatch repair protein MutS.